The primary structure comprises 431 residues: Tryptophan synthase beta chain 2 (431 aa).

Lysine 111 carries the N6-(pyridoxal phosphate)lysine modification.

This sequence belongs to the TrpB family. As to quaternary structure, tetramer of two alpha and two beta chains. Requires pyridoxal 5'-phosphate as cofactor.

It catalyses the reaction (1S,2R)-1-C-(indol-3-yl)glycerol 3-phosphate + L-serine = D-glyceraldehyde 3-phosphate + L-tryptophan + H2O. It participates in amino-acid biosynthesis; L-tryptophan biosynthesis; L-tryptophan from chorismate: step 5/5. Functionally, the beta subunit is responsible for the synthesis of L-tryptophan from indole and L-serine. The polypeptide is Tryptophan synthase beta chain 2 (trpB2) (Sulfurisphaera tokodaii (strain DSM 16993 / JCM 10545 / NBRC 100140 / 7) (Sulfolobus tokodaii)).